The primary structure comprises 257 residues: UPF0246 protein BPP3440 (257 aa).

This sequence belongs to the UPF0246 family.

This Bordetella parapertussis (strain 12822 / ATCC BAA-587 / NCTC 13253) protein is UPF0246 protein BPP3440.